A 473-amino-acid chain; its full sequence is Photosystem II CP43 reaction center protein (473 aa).

Residues 1-14 (MKTLYSLRRFYPVE) constitute a propeptide that is removed on maturation. Threonine 15 carries the post-translational modification N-acetylthreonine. Residue threonine 15 is modified to Phosphothreonine. Transmembrane regions (helical) follow at residues 69–93 (LFEV…PHLA), 134–155 (LLGP…KDRN), 178–200 (KALS…RKIT), 255–275 (KPFA…LSYS), and 291–312 (WFNN…ASQA). Glutamate 367 contributes to the [CaMn4O5] cluster binding site. A helical transmembrane segment spans residues 447 to 471 (RARAAAAGFEKGIDRDFEPVLSMTP).

This sequence belongs to the PsbB/PsbC family. PsbC subfamily. As to quaternary structure, PSII is composed of 1 copy each of membrane proteins PsbA, PsbB, PsbC, PsbD, PsbE, PsbF, PsbH, PsbI, PsbJ, PsbK, PsbL, PsbM, PsbT, PsbX, PsbY, PsbZ, Psb30/Ycf12, at least 3 peripheral proteins of the oxygen-evolving complex and a large number of cofactors. It forms dimeric complexes. It depends on Binds multiple chlorophylls and provides some of the ligands for the Ca-4Mn-5O cluster of the oxygen-evolving complex. It may also provide a ligand for a Cl- that is required for oxygen evolution. PSII binds additional chlorophylls, carotenoids and specific lipids. as a cofactor.

It localises to the plastid. The protein localises to the chloroplast thylakoid membrane. One of the components of the core complex of photosystem II (PSII). It binds chlorophyll and helps catalyze the primary light-induced photochemical processes of PSII. PSII is a light-driven water:plastoquinone oxidoreductase, using light energy to abstract electrons from H(2)O, generating O(2) and a proton gradient subsequently used for ATP formation. This Pelargonium hortorum (Common geranium) protein is Photosystem II CP43 reaction center protein.